Here is a 469-residue protein sequence, read N- to C-terminus: MTSQLHKKGEAWSARFSEPMSELVKRYTSSVFFDKRLALVDIAGSLAHANMLAAQKIISADDLAAIERGMAQIKGEIERGEFEWQLDLEDVHLNIEARLTALIGDAGKRLHTGRSRNDQVATDIRLWLRGEIDRIGGLLNDLRGALLDLAEQNADTIMPGFTHLQVAQPVTFGHHLLAYVEMFSRDAERMRDCRTRVNRLPLGAAALAGTSYPIDRHAVAKTLGFDGICANSLDAVSDRDFAIEFTAASALVMTHVSRFSEELVLWMSPRVGFIDIADRFCTGSSIMPQKKNPDVPELARGKTGRVNGHLMALLTLMKGQPLAYNKDNQEDKEPLFDTVDTVADTLRIFAEMVAGITVKPDAMRAAALQGFSTATDLADYLVKRGLPFRDAHEAVAHAVKVCDDRGIDLADLTLDEMKQELPNVAHLIGEDVFGYLTLEGSVASRNHPGGTAPDQVRAAVKAARAALGQ.

Belongs to the lyase 1 family. Argininosuccinate lyase subfamily.

The protein resides in the cytoplasm. It carries out the reaction 2-(N(omega)-L-arginino)succinate = fumarate + L-arginine. It participates in amino-acid biosynthesis; L-arginine biosynthesis; L-arginine from L-ornithine and carbamoyl phosphate: step 3/3. The polypeptide is Argininosuccinate lyase (Burkholderia lata (strain ATCC 17760 / DSM 23089 / LMG 22485 / NCIMB 9086 / R18194 / 383)).